A 104-amino-acid chain; its full sequence is MGSRCAKLSTGHGPAQNTGHSRGHESSMKKLVACVSQDNFSLSSEGEEEEEDEEDEEEEDDDEEDEEEEQIPVKGKLLLLEPEKQDGAEDAVAQPSPEPKQKHS.

Residues 1–104 (MGSRCAKLST…PSPEPKQKHS (104 aa)) form a disordered region. Residues 45 to 70 (EGEEEEEDEEDEEEEDDDEEDEEEEQ) are compositionally biased toward acidic residues. Position 96 is a phosphoserine (serine 96).

Belongs to the protamine P3 family. In terms of tissue distribution, testis.

The protein localises to the nucleus. It is found in the chromosome. Functionally, protamines substitute for histones in the chromatin of sperm during the haploid phase of spermatogenesis. They compact sperm DNA into a highly condensed, stable and inactive complex. The sequence is that of Protamine-3 (Prm3) from Rattus norvegicus (Rat).